Reading from the N-terminus, the 106-residue chain is Large ribosomal subunit protein uL24 (106 aa).

This sequence belongs to the universal ribosomal protein uL24 family. As to quaternary structure, part of the 50S ribosomal subunit.

Its function is as follows. One of two assembly initiator proteins, it binds directly to the 5'-end of the 23S rRNA, where it nucleates assembly of the 50S subunit. In terms of biological role, one of the proteins that surrounds the polypeptide exit tunnel on the outside of the subunit. The polypeptide is Large ribosomal subunit protein uL24 (Blochmanniella pennsylvanica (strain BPEN)).